The chain runs to 233 residues: Protein lin-7 homolog A (233 aa).

Positions 25–80 (LDRDVARAIELLEKLQESGEVPVHKLQSLKKVLQSEFCTAIREVYQYMHETITVNG) constitute an L27 domain. The PDZ domain occupies 108–190 (VVELPKTDEG…SVKLVVRYTP (83 aa)).

It belongs to the lin-7 family. Forms a complex with CASK and CASKIN1. Component of the brain-specific heterotrimeric complex (LIN-10-LIN-2-LIN-7 complex) composed of at least APBA1, CASK, and LIN7, which associates with the motor protein KIF17 to transport vesicles along microtubules. Can also interact with other modular proteins containing protein-protein interaction domains like PALS1, PALS2, MPP7, DLG1, DLG2 and DLG3 through its L27 domain. Interacts with DLG4, GRIN2B and MARCHF11 as well as CDH1 and CTNNB1, the channels KCNJ12/Kir2.2, KCNJ4/Kir2.3 and probably KCNJ2/Kir2.1 and SLC6A12/BGT-1 via its PDZ domain. The association of LIN7A with cadherin and beta-catenin is calcium-dependent, occurs at synaptic junctions and requires the actin cytoskeleton. Interacts with EGFR, ERBB2, ERBB3 and ERBB4 with both PDZ and KID domains. Associates with KIF17 via APBA1. Interacts with HTR4. Forms a tripartite complex composed of DLG1, MPP7 and LIN7 (LIN7A or LIN7C).

It localises to the cell membrane. The protein resides in the basolateral cell membrane. Its subcellular location is the cell junction. It is found in the postsynaptic density membrane. The protein localises to the tight junction. In terms of biological role, plays a role in establishing and maintaining the asymmetric distribution of channels and receptors at the plasma membrane of polarized cells. Forms membrane-associated multiprotein complexes that may regulate delivery and recycling of proteins to the correct membrane domains. The tripartite complex composed of LIN7 (LIN7A, LIN7B or LIN7C), CASK and APBA1 associates with the motor protein KIF17 to transport vesicles containing N-methyl-D-aspartate (NMDA) receptor subunit NR2B along microtubules. This complex may have the potential to couple synaptic vesicle exocytosis to cell adhesion in brain. Ensures the proper localization of GRIN2B (subunit 2B of the NMDA receptor) to neuronal postsynaptic density and may function in localizing synaptic vesicles at synapses where it is recruited by beta-catenin and cadherin. Required to localize Kir2 channels, GABA transporter (SLC6A12) and EGFR/ERBB1, ERBB2, ERBB3 and ERBB4 to the basolateral membrane of epithelial cells. This is Protein lin-7 homolog A (LIN7A) from Bos taurus (Bovine).